Consider the following 488-residue polypeptide: Leucine-rich repeat-containing protein 74A (488 aa).

8 LRR repeats span residues 134-155 (AVTK…SLVE), 162-182 (YLQE…RIIS), 191-212 (SIWS…LLCQ), 219-239 (QIKK…EHLG), 247-268 (GLTS…ALCN), 275-296 (TLTK…ALGE), 303-324 (CLVY…KISK), and 331-351 (SLRV…ILLI).

This Homo sapiens (Human) protein is Leucine-rich repeat-containing protein 74A.